The chain runs to 116 residues: MSGSTAIGLTTEVISIITFILVIAIFVIEIVSCVTMMTLKAITLKKRLSFCQGCGKNASLVILPCKNKVCMECALKMRCPVCYEACLWCENPDGSLSSLALINKERNKVRDNLPEP.

A helical membrane pass occupies residues 13-33; sequence VISIITFILVIAIFVIEIVSC.

The protein resides in the host membrane. The sequence is that of Putative membrane protein from Alethinophid 1 reptarenavirus (isolate AlRrV1/Boa/USA/BC/2009) (Golden Gate virus).